The following is a 316-amino-acid chain: Protein U25 (316 aa).

Belongs to the herpesviridae US22 family.

In Human herpesvirus 6B (HHV-6 variant B), this protein is Protein U25 (U25).